The following is a 179-amino-acid chain: ATP synthase subunit delta (179 aa).

It belongs to the ATPase delta chain family. F-type ATPases have 2 components, F(1) - the catalytic core - and F(0) - the membrane proton channel. F(1) has five subunits: alpha(3), beta(3), gamma(1), delta(1), epsilon(1). F(0) has three main subunits: a(1), b(2) and c(10-14). The alpha and beta chains form an alternating ring which encloses part of the gamma chain. F(1) is attached to F(0) by a central stalk formed by the gamma and epsilon chains, while a peripheral stalk is formed by the delta and b chains.

It localises to the cell membrane. In terms of biological role, f(1)F(0) ATP synthase produces ATP from ADP in the presence of a proton or sodium gradient. F-type ATPases consist of two structural domains, F(1) containing the extramembraneous catalytic core and F(0) containing the membrane proton channel, linked together by a central stalk and a peripheral stalk. During catalysis, ATP synthesis in the catalytic domain of F(1) is coupled via a rotary mechanism of the central stalk subunits to proton translocation. Its function is as follows. This protein is part of the stalk that links CF(0) to CF(1). It either transmits conformational changes from CF(0) to CF(1) or is implicated in proton conduction. This chain is ATP synthase subunit delta, found in Listeria innocua serovar 6a (strain ATCC BAA-680 / CLIP 11262).